We begin with the raw amino-acid sequence, 208 residues long: Protein GrpE (208 aa).

A compositionally biased stretch (basic and acidic residues) spans 1-25 (MVDNKDFNEELKESIQEELDNETKS). The disordered stretch occupies residues 1–38 (MVDNKDFNEELKESIQEELDNETKSENPNIDEEVEEVS). Positions 29–38 (NIDEEVEEVS) are enriched in acidic residues.

It belongs to the GrpE family. As to quaternary structure, homodimer.

It localises to the cytoplasm. Participates actively in the response to hyperosmotic and heat shock by preventing the aggregation of stress-denatured proteins, in association with DnaK and GrpE. It is the nucleotide exchange factor for DnaK and may function as a thermosensor. Unfolded proteins bind initially to DnaJ; upon interaction with the DnaJ-bound protein, DnaK hydrolyzes its bound ATP, resulting in the formation of a stable complex. GrpE releases ADP from DnaK; ATP binding to DnaK triggers the release of the substrate protein, thus completing the reaction cycle. Several rounds of ATP-dependent interactions between DnaJ, DnaK and GrpE are required for fully efficient folding. This Clostridium perfringens (strain SM101 / Type A) protein is Protein GrpE.